Here is a 1125-residue protein sequence, read N- to C-terminus: ATP-dependent DNA helicase Hel308 (1125 aa).

Residues 1–29 (MKVDELPIDERIKRVIKERGIEELYPPQA) carry the Q motif motif. Residues Gln28 and 46-53 (IPTASGKT) contribute to the ATP site. The region spanning 33–197 (KSGVLEGKNL…WLDASLVVSD (165 aa)) is the Helicase ATP-binding domain. The DEAH box signature appears at 145-148 (DEVH). A Helicase C-terminal domain is found at 226–440 (NWESLVLDAV…ELKERLESET (215 aa)). In terms of domain architecture, DOD-type homing endonuclease spans 500–640 (LIGLWIAEGS…LQLLVASLGY (141 aa)).

This sequence belongs to the helicase family. Hel308 subfamily. In terms of assembly, monomer. In terms of processing, this protein undergoes a protein self splicing that involves a post-translational excision of the intervening region (intein) followed by peptide ligation.

It carries out the reaction Couples ATP hydrolysis with the unwinding of duplex DNA by translocating in the 3'-5' direction.. It catalyses the reaction ATP + H2O = ADP + phosphate + H(+). In terms of biological role, DNA-dependent ATPase and 3'-5' DNA helicase that may be involved in repair of stalled replication forks. The sequence is that of ATP-dependent DNA helicase Hel308 from Thermococcus kodakarensis (strain ATCC BAA-918 / JCM 12380 / KOD1) (Pyrococcus kodakaraensis (strain KOD1)).